We begin with the raw amino-acid sequence, 148 residues long: MKVKIKQIYQFEGTSSLPAYSTNGSAGMDLYAAIASPMIIKPHETALVPAGIAISLPYGYEAQIRSRSGLASKFGVIVLNSPGTIDSDYRGELKIIMINLGQKDFQLTPAMRIAQMVIAKYEVISWEIVDDLDETERGEKGFGSSGLK.

Substrate contacts are provided by residues 67–69 (RSG), Asn-80, 84–86 (TID), and Lys-94.

It belongs to the dUTPase family. Requires Mg(2+) as cofactor.

It catalyses the reaction dUTP + H2O = dUMP + diphosphate + H(+). Its pathway is pyrimidine metabolism; dUMP biosynthesis; dUMP from dCTP (dUTP route): step 2/2. In terms of biological role, this enzyme is involved in nucleotide metabolism: it produces dUMP, the immediate precursor of thymidine nucleotides and it decreases the intracellular concentration of dUTP so that uracil cannot be incorporated into DNA. The chain is Deoxyuridine 5'-triphosphate nucleotidohydrolase from Orientia tsutsugamushi (strain Ikeda) (Rickettsia tsutsugamushi).